The primary structure comprises 282 residues: Pantothenate synthetase (282 aa).

ATP is bound at residue 30-37 (MGALHAGH). The active-site Proton donor is H37. Position 61 (Q61) interacts with (R)-pantoate. Q61 is a binding site for beta-alanine. 147 to 150 (GEKD) provides a ligand contact to ATP. Residue Q153 coordinates (R)-pantoate. ATP-binding positions include V176 and 184-187 (LSSR).

The protein belongs to the pantothenate synthetase family. In terms of assembly, homodimer.

It localises to the cytoplasm. It catalyses the reaction (R)-pantoate + beta-alanine + ATP = (R)-pantothenate + AMP + diphosphate + H(+). It participates in cofactor biosynthesis; (R)-pantothenate biosynthesis; (R)-pantothenate from (R)-pantoate and beta-alanine: step 1/1. Catalyzes the condensation of pantoate with beta-alanine in an ATP-dependent reaction via a pantoyl-adenylate intermediate. The sequence is that of Pantothenate synthetase from Bacteroides fragilis (strain YCH46).